Reading from the N-terminus, the 404-residue chain is MEEREGTNINNNITSSFGLKQQHEAAASDGGYSMDPPPRPENPNPFLVPPTTVPAAATVAAAVTENAATPFSLTMPTENTSAEQLKKKRGRPRKYNPDGTLVVTLSPMPISSSVPLTSEFPPRKRGRGRGKSNRWLKKSQMFQFDRSPVDTNLAGVGTADFVGANFTPHVLIVNAGEDVTMKIMTFSQQGSRAICILSANGPISNVTLRQSMTSGGTLTYEGRFEILSLTGSFMQNDSGGTRSRAGGMSVCLAGPDGRVFGGGLAGLFLAAGPVQVMVGTFIAGQEQSQLELAKERRLRFGAQPSSISFNISAEERKARFERLNKSVAIPAPTTSYTHVNTTNAVHSYYTNSVNHVKDPFSSIPVGGGGGGEVGEEEGEEDDDELEGEDEEFGGDSQSDNEIPS.

Disordered stretches follow at residues 1-51 (MEER…VPPT), 70-100 (PFSL…PDGT), and 113-133 (SVPL…GKSN). Residues 7 to 19 (TNINNNITSSFGL) are compositionally biased toward polar residues. The segment covering 35–51 (DPPPRPENPNPFLVPPT) has biased composition (pro residues). Over residues 71–83 (FSLTMPTENTSAE) the composition is skewed to polar residues. A Bipartite nuclear localization signal motif is present at residues 86–94 (KKKRGRPRK). Positions 86–98 (KKKRGRPRKYNPD) form a DNA-binding region, a.T hook. Over residues 123–133 (RKRGRGRGKSN) the composition is skewed to basic residues. One can recognise a PPC domain in the interval 163-308 (GANFTPHVLI…RFGAQPSSIS (146 aa)). The tract at residues 359 to 404 (PFSSIPVGGGGGGEVGEEEGEEDDDELEGEDEEFGGDSQSDNEIPS) is disordered. Positions 373–393 (VGEEEGEEDDDELEGEDEEFG) are enriched in acidic residues.

Homodimer. Interacts with AHL4. Expressed in both procambium and xylem precursors of the root meristem. Also detected in the endodermis in the late elongation zone and onwards.

The protein localises to the nucleus. In terms of biological role, transcription factor that specifically binds AT-rich DNA sequences related to the nuclear matrix attachment regions (MARs). Acts redundantly with AHL4 to regulate the formation of tissue boundary between the xylem and procambium in the root meristem. This Arabidopsis thaliana (Mouse-ear cress) protein is AT-hook motif nuclear-localized protein 3.